Reading from the N-terminus, the 138-residue chain is Large ribosomal subunit protein bL19 (138 aa).

This sequence belongs to the bacterial ribosomal protein bL19 family.

In terms of biological role, this protein is located at the 30S-50S ribosomal subunit interface and may play a role in the structure and function of the aminoacyl-tRNA binding site. This is Large ribosomal subunit protein bL19 (rplS) from Rickettsia prowazekii (strain Madrid E).